Consider the following 277-residue polypeptide: 5'-nucleotidase SurE (277 aa).

The a divalent metal cation site is built by aspartate 16, aspartate 17, serine 48, and asparagine 101.

It belongs to the SurE nucleotidase family. The cofactor is a divalent metal cation.

It is found in the cytoplasm. It carries out the reaction a ribonucleoside 5'-phosphate + H2O = a ribonucleoside + phosphate. In terms of biological role, nucleotidase that shows phosphatase activity on nucleoside 5'-monophosphates. This Parvibaculum lavamentivorans (strain DS-1 / DSM 13023 / NCIMB 13966) protein is 5'-nucleotidase SurE.